The following is a 281-amino-acid chain: Para-Rep C9 (281 aa).

The CRESS-DNA virus Rep endonuclease domain occupies 1-95 (MSAVNWVFTL…VAGPWSYGEL (95 aa)). The RCR-1 signature appears at 7–10 (VFTL). A divalent metal cation is bound by residues Glu-33 and His-39. Positions 39–41 (HIQ) match the RCR-2 motif. The Nuclear localization signal motif lies at 48 to 69 (KKAKMNTVKNIIGGNPHLEKMK). Tyr-78 serves as the catalytic For DNA cleavage activity. The short motif at 78–81 (YAQK) is the RCR-3 element. Glu-83 contacts a divalent metal cation. The Nuclear localization signal signature appears at 95–101 (LLKKGSH). An ATP-binding site is contributed by 178-180 (GKS).

This sequence belongs to the nanoviridea/circoviridae replication-associated protein family. In terms of assembly, homooligomer (Potential). Rep binds to repeated DNA motifs (iterons). Mg(2+) is required as a cofactor. Requires Mn(2+) as cofactor.

It is found in the host nucleus. The enzyme catalyses ATP + H2O = ADP + phosphate + H(+). In terms of biological role, initiates and terminates the replication only of its own subviral DNA molecule. The closed circular ssDNA genome is first converted to a superhelical dsDNA. Rep binds a specific hairpin at the genome origin of replication. Introduces an endonucleolytic nick within the intergenic region of the genome, thereby initiating the rolling circle replication (RCR). Following cleavage, binds covalently to the 5'-phosphate of DNA as a tyrosyl ester. The cleavage gives rise to a free 3'-OH that serves as a primer for the cellular DNA polymerase. The polymerase synthesizes the (+) strand DNA by rolling circle mechanism. After one round of replication, a Rep-catalyzed nucleotidyl transfer reaction releases a circular single-stranded virus genome, thereby terminating the replication. Displays origin-specific DNA cleavage, nucleotidyl transferase, ATPase and helicase activities. In Faba bean necrotic yellows C9 alphasatellite (FBNYC9A), this protein is Para-Rep C9 (C9).